The following is a 312-amino-acid chain: Pantothenate kinase (312 aa).

97–104 (GSVAVGKS) serves as a coordination point for ATP.

The protein belongs to the prokaryotic pantothenate kinase family.

It is found in the cytoplasm. The enzyme catalyses (R)-pantothenate + ATP = (R)-4'-phosphopantothenate + ADP + H(+). Its pathway is cofactor biosynthesis; coenzyme A biosynthesis; CoA from (R)-pantothenate: step 1/5. This chain is Pantothenate kinase, found in Mycobacterium sp. (strain JLS).